Here is a 188-residue protein sequence, read N- to C-terminus: Inosine triphosphate pyrophosphatase (188 aa).

Residue 9–14 (TGNAKK) coordinates ITP. Glu-39 provides a ligand contact to Mg(2+). ITP is bound by residues Lys-51, 67 to 68 (DT), Lys-84, 143 to 146 (FGWD), Lys-166, and 171 to 172 (HR).

Belongs to the HAM1 NTPase family. Homodimer. It depends on Mg(2+) as a cofactor. The cofactor is Mn(2+).

The protein resides in the cytoplasm. The enzyme catalyses ITP + H2O = IMP + diphosphate + H(+). It carries out the reaction dITP + H2O = dIMP + diphosphate + H(+). It catalyses the reaction XTP + H2O = XMP + diphosphate + H(+). In terms of biological role, pyrophosphatase that hydrolyzes non-canonical purine nucleotides such as inosine triphosphate (ITP), deoxyinosine triphosphate (dITP) or xanthosine 5'-triphosphate (XTP) to their respective monophosphate derivatives. The enzyme does not distinguish between the deoxy- and ribose forms. Probably excludes non-canonical purines from RNA and DNA precursor pools, thus preventing their incorporation into RNA and DNA and avoiding chromosomal lesions. The sequence is that of Inosine triphosphate pyrophosphatase from Anopheles gambiae (African malaria mosquito).